An 860-amino-acid chain; its full sequence is Protein argonaute-2 (860 aa).

Position 2 is a 3'-nitrotyrosine (Y2). The 120-residue stretch at P230–A349 folds into the PAZ domain. An interaction with guide RNA region spans residues Y312–H317. S388 bears the Phosphoserine mark. The region spanning L518–V819 is the Piwi domain. Residues G525–K567 are interaction with guide RNA. Positions F588–P591 are interaction with GW182 family members. D598 lines the a divalent metal cation pocket. An interaction with GW182 family members region spans residues L651–K661. D670 is an a divalent metal cation binding site. P701 carries the 4-hydroxyproline modification. Interaction with guide RNA regions lie at residues K710–R711, H754–R762, and Y791–R813. H808 is an a divalent metal cation binding site. Phosphoserine occurs at positions 825, 829, 832, and 835.

Belongs to the argonaute family. Ago subfamily. In terms of assembly, interacts with DICER1 through its Piwi domain and with TARBP2 during assembly of the RNA-induced silencing complex (RISC). Together, DICER1, AGO2 and TARBP2 constitute the trimeric RISC loading complex (RLC), or micro-RNA (miRNA) loading complex (miRLC). Within the RLC/miRLC, DICER1 and TARBP2 are required to process precursor miRNAs (pre-miRNAs) to mature miRNAs and then load them onto AGO2. AGO2 bound to the mature miRNA constitutes the minimal RISC and may subsequently dissociate from DICER1 and TARBP2. Note however that the term RISC has also been used to describe the trimeric RLC/miRLC. The formation of RISC complexes containing siRNAs rather than miRNAs appears to occur independently of DICER1. Interacts with AGO1. Also interacts with DDB1, DDX5, DDX6, DDX20, DHX30, DHX36, DDX47, DHX9, ELAVL, FXR1, GEMIN4, HNRNPF, IGF2BP1, ILF3, IMP8, MATR3, PABPC1, PRMT5, P4HA1, P4HB, RBM4, SART3, TNRC6A, TNRC6B, UPF1 and YBX1. Interacts with the P-body components DCP1A and XRN1. Associates with polysomes and messenger ribonucleoproteins (mNRPs). Interacts with RBM4; the interaction is modulated under stress-induced conditions, occurs under both cell proliferation and differentiation conditions and in an RNA- and phosphorylation-independent manner. Interacts with LIMD1, WTIP and AJUBA. Interacts with TRIM71; the interaction increases in presence of RNA. Interacts with APOBEC3G in an RNA-dependent manner. Interacts with APOBEC3A, APOBEC3C, APOBEC3F and APOBEC3H. Interacts with DICER1, TARBP2, EIF6, MOV10 and RPL7A (60S ribosome subunit); they form a large RNA-induced silencing complex (RISC). Interacts with FMR1. Interacts with ZFP36. Interacts with RC3H1; the interaction is RNA independent. Found in a complex, composed of AGO2, CHD7 and ARB2A. Interacts with SND1 and SYT11. Interacts with CLNK. Interacts with GARRE1. Interacts with GRB2; this interaction is important for the formation of a ternary complex containing GRB2, AGO2 and DICER1. Mg(2+) is required as a cofactor. The cofactor is Mn(2+). Post-translationally, hydroxylated. 4-hydroxylation appears to enhance protein stability but is not required for miRNA-binding or endonuclease activity. In terms of processing, ubiquitinated on surface-exposed lysines by a SCF-like E3 ubiquitin-protein ligase complex containing ZSWIM8 during target-directed microRNA degradation (TDMD), a process that mediates degradation of microRNAs (miRNAs). Ubiquitination by the SCF-like E3 ubiquitin-protein ligase complex containing ZSWIM8 leads to its subsequent degradation, thereby exposing miRNAs for degradation. ZSWIM8 recognizes and binds AGO2 when it is engaged with a TDMD target. Phosphorylation at Ser-388 by AKT3; leads to up-regulate translational repression of microRNA target and down-regulate endonucleolytic cleavage. Post-translationally, a phosphorylation cycle of C-terminal serine cluster (Ser-825-Ser-835) regulates the release of target mRNAs. Target-binding leads to phosphorylation of these residues by CSNK1A1, which reduces the affinity of AGO2 for mRNA and enables target release. The ANKRD52-PPP6C phosphatase complex dephosphorylates the residues, which primes AGO2 for binding a new target.

It is found in the cytoplasm. The protein localises to the P-body. Its subcellular location is the nucleus. It catalyses the reaction Endonucleolytic cleavage to 5'-phosphomonoester.. Its function is as follows. Required for RNA-mediated gene silencing (RNAi) by the RNA-induced silencing complex (RISC). The 'minimal RISC' appears to include AGO2 bound to a short guide RNA such as a microRNA (miRNA) or short interfering RNA (siRNA). These guide RNAs direct RISC to complementary mRNAs that are targets for RISC-mediated gene silencing. The precise mechanism of gene silencing depends on the degree of complementarity between the miRNA or siRNA and its target. Binding of RISC to a perfectly complementary mRNA generally results in silencing due to endonucleolytic cleavage of the mRNA specifically by AGO2. Binding of RISC to a partially complementary mRNA results in silencing through inhibition of translation, and this is independent of endonuclease activity. May inhibit translation initiation by binding to the 7-methylguanosine cap, thereby preventing the recruitment of the translation initiation factor eIF4-E. May also inhibit translation initiation via interaction with EIF6, which itself binds to the 60S ribosomal subunit and prevents its association with the 40S ribosomal subunit. The inhibition of translational initiation leads to the accumulation of the affected mRNA in cytoplasmic processing bodies (P-bodies), where mRNA degradation may subsequently occur. In some cases RISC-mediated translational repression is also observed for miRNAs that perfectly match the 3' untranslated region (3'-UTR). Can also up-regulate the translation of specific mRNAs under certain growth conditions. Binds to the AU element of the 3'-UTR of the TNF (TNF-alpha) mRNA and up-regulates translation under conditions of serum starvation. Also required for transcriptional gene silencing (TGS), in which short RNAs known as antigene RNAs or agRNAs direct the transcriptional repression of complementary promoter regions. The protein is Protein argonaute-2 (Ago2) of Rattus norvegicus (Rat).